The following is a 3072-amino-acid chain: Platelet binding protein GspB (3072 aa).

Positions 1–85 are cleaved as a signal peptide; it reads MFFKRQKGQY…AVLGGAVVTS (85 aa). Disordered regions lie at residues 117 to 147, 182 to 254, 876 to 909, 936 to 969, 1024 to 2085, 2106 to 2139, 2173 to 2223, 2250 to 2595, 2625 to 2965, and 3014 to 3045; these read EAAT…SASS, SESL…APNV, SAST…SVSA, SASV…SVSA, VSAS…SVSA, TSAS…NASV, and SQSL…GESE. Positions 118-127 are enriched in polar residues; sequence AATTLSSTEA. Residues 123 to 236 form a ser-rich region 1 (SSR1) region; the sequence is SSTEANPVES…SSQQSTEASS (114 aa). Low complexity-rich tracts occupy residues 131–147 and 182–238; these read ESLS…SASS and SESL…SSQT. The tract at residues 237–603 is basic region (BR); sequence QTGRRRTRRA…GSKFIDTRAG (367 aa). The tract at residues 604–3028 is ser-rich region 2 (SSR2); it reads SISKSQSTSN…ESQSSSASQS (2425 aa). Residues 3014-3028 show a composition bias toward low complexity; the sequence is SQSLSESQSSSASQS. Residues 3038–3042 carry the LPXTG sorting signal motif; it reads LPRTG. At Thr-3041 the chain carries Pentaglycyl murein peptidoglycan amidated threonine. Residues 3042 to 3072 constitute a propeptide, removed by sortase; that stretch reads GESENKASILALGLGALGLAFKKRKKNESED.

The protein belongs to the serine-rich repeat protein (SRRP) family. Both SSR domains in the unglycosylated protein bind to Asp2 and Asp3; glycosylated protein binds less well. Interacts with the human cell surface glycoprotein GP1BA. Proteolytically cleaved by a metalloprotease. Post-translationally, both SSR1 and SSR2 domains are glycosylated. A truncated derivative (residues 1-2062) contains 105 nmol per nmol of protein, suggesting at least 10% of the apparent molecular weight is due to carbohydrates. Glucose and N-acetylglucosamine are present in a ratio of 30:73 residues per truncated polypeptide, as well as minor amounts of galactose and N-acetylgalactosamine. Glycosylation occurs intracellularly in the Ser-rich regions SSR1 and SSR2. Glycosylation of SSR2 domain may be required to prevent aggregation of GspB. It is probable that most of the Ser residues in SSR1 and SSR2 are O-GlcNAcylated. Sequential glycosylation by sugar transferases are able to generate complex sugar polymorphisms.

It localises to the secreted. The protein localises to the cell wall. Its function is as follows. Plays a role in virulence and host-pathogen interactions. Mediates binding to human platelets via interaction with the human cell surface glycoprotein GP1BA. Plays a positive role in biofilm formation, possibly by self-association via the basic region (BR). This chain is Platelet binding protein GspB (gspB), found in Streptococcus gordonii.